The sequence spans 136 residues: Protein PsiE (136 aa).

The next 4 membrane-spanning stretches (helical) occupy residues 15 to 35, 55 to 75, 82 to 102, and 108 to 128; these read ILQT…VVFL, YELV…ALIV, FHFP…RLII, and PLDV…LWLC.

This sequence belongs to the PsiE family.

It localises to the cell inner membrane. This is Protein PsiE from Escherichia coli O17:K52:H18 (strain UMN026 / ExPEC).